The sequence spans 103 residues: Histone H4 (103 aa).

Positions 1–14 are enriched in gly residues; the sequence is MSGRGKGGKGLGKG. A disordered region spans residues 1-20; the sequence is MSGRGKGGKGLGKGGAKRHR. Residues K6, K9, K13, K17, K32, and K45 each carry the N6-(2-hydroxyisobutyryl)lysine; alternate modification. K6 bears the N6-acetyl-N6-methyllysine; alternate mark. 6 positions are modified to N6-butyryllysine; alternate: K6, K9, K13, K17, K32, and K45. K6 bears the N6-glutaryllysine; alternate mark. The residue at position 9 (K9) is an N6-propionyllysine; alternate. K13 carries the post-translational modification N6-acetyl-N6-methyllysine; alternate. The residue at position 13 (K13) is an N6-glutaryllysine; alternate. An N6-propionyllysine; alternate mark is found at K17, K32, and K45. A DNA-binding region spans residues 17 to 21; that stretch reads KRHRK. N6-glutaryllysine; alternate is present on K32. K32 bears the N6-succinyllysine; alternate mark. K60, K78, K80, and K92 each carry N6-glutaryllysine; alternate. An N6-(2-hydroxyisobutyryl)lysine modification is found at K60. An N6-(2-hydroxyisobutyryl)lysine; alternate mark is found at K78, K80, and K92. K78, K80, and K92 each carry N6-butyryllysine; alternate. N6-propionyllysine; alternate is present on residues K78, K80, and K92. Residue K78 is modified to N6-succinyllysine. Position 92 is an N6-succinyllysine; alternate (K92).

Belongs to the histone H4 family. As to quaternary structure, the nucleosome is a histone octamer containing two molecules each of H2A, H2B, H3 and H4 assembled in one H3-H4 heterotetramer and two H2A-H2B heterodimers. The octamer wraps approximately 147 bp of DNA. In terms of processing, butyrylation of histones marks active promoters and competes with histone acetylation. Glutarylation at Lys-92 (H4K91glu) destabilizes nucleosomes by promoting dissociation of the H2A-H2B dimers from nucleosomes.

It localises to the nucleus. The protein localises to the chromosome. Core component of nucleosome. Nucleosomes wrap and compact DNA into chromatin, limiting DNA accessibility to the cellular machineries which require DNA as a template. Histones thereby play a central role in transcription regulation, DNA repair, DNA replication and chromosomal stability. DNA accessibility is regulated via a complex set of post-translational modifications of histones, also called histone code, and nucleosome remodeling. The polypeptide is Histone H4 (H4.1) (Oikopleura dioica (Tunicate)).